We begin with the raw amino-acid sequence, 456 residues long: Asparagine--tRNA ligase (456 aa).

Belongs to the class-II aminoacyl-tRNA synthetase family. As to quaternary structure, homodimer.

It is found in the cytoplasm. It carries out the reaction tRNA(Asn) + L-asparagine + ATP = L-asparaginyl-tRNA(Asn) + AMP + diphosphate + H(+). The sequence is that of Asparagine--tRNA ligase from Mycoplasmoides gallisepticum (strain R(low / passage 15 / clone 2)) (Mycoplasma gallisepticum).